We begin with the raw amino-acid sequence, 141 residues long: Nucleoside diphosphate kinase (141 aa).

Residues Lys-11, Phe-59, Arg-87, Thr-93, Arg-104, and Asn-114 each contribute to the ATP site. His-117 functions as the Pros-phosphohistidine intermediate in the catalytic mechanism.

This sequence belongs to the NDK family. Homotetramer. Requires Mg(2+) as cofactor.

Its subcellular location is the cytoplasm. The enzyme catalyses a 2'-deoxyribonucleoside 5'-diphosphate + ATP = a 2'-deoxyribonucleoside 5'-triphosphate + ADP. It catalyses the reaction a ribonucleoside 5'-diphosphate + ATP = a ribonucleoside 5'-triphosphate + ADP. In terms of biological role, major role in the synthesis of nucleoside triphosphates other than ATP. The ATP gamma phosphate is transferred to the NDP beta phosphate via a ping-pong mechanism, using a phosphorylated active-site intermediate. The sequence is that of Nucleoside diphosphate kinase from Bordetella avium (strain 197N).